The primary structure comprises 494 residues: tRNA (guanine(37)-N(1))-methyltransferase (494 aa).

The N-terminal 32 residues, Met1–Thr32, are a transit peptide targeting the mitochondrion. Residues His278, Asp316–Leu317, Asp344–Gly345, and Asn377 each bind S-adenosyl-L-methionine. A disordered region spans residues Asp468–Ser494.

The protein belongs to the class I-like SAM-binding methyltransferase superfamily. TRM5/TYW2 family. As to quaternary structure, monomer.

It is found in the mitochondrion matrix. Its subcellular location is the nucleus. The protein resides in the cytoplasm. It carries out the reaction guanosine(37) in tRNA + S-adenosyl-L-methionine = N(1)-methylguanosine(37) in tRNA + S-adenosyl-L-homocysteine + H(+). Involved in mitochondrial tRNA methylation. Specifically methylates the N1 position of guanosine-37 in various tRNAs. Methylation is not dependent on the nature of the nucleoside 5' of the target nucleoside. This is the first step in the biosynthesis of wybutosine (yW), a modified base adjacent to the anticodon of tRNAs and required for accurate decoding. This is tRNA (guanine(37)-N(1))-methyltransferase (trmt5) from Xenopus tropicalis (Western clawed frog).